The following is a 358-amino-acid chain: Methylthioribose-1-phosphate isomerase (358 aa).

Substrate contacts are provided by residues 54 to 56, Arg-96, and Gln-205; that span reads RGA. Residue Asp-246 is the Proton donor of the active site. Residue 256–257 participates in substrate binding; sequence NK.

The protein belongs to the eIF-2B alpha/beta/delta subunits family. MtnA subfamily.

It carries out the reaction 5-(methylsulfanyl)-alpha-D-ribose 1-phosphate = 5-(methylsulfanyl)-D-ribulose 1-phosphate. Its pathway is amino-acid biosynthesis; L-methionine biosynthesis via salvage pathway; L-methionine from S-methyl-5-thio-alpha-D-ribose 1-phosphate: step 1/6. In terms of biological role, catalyzes the interconversion of methylthioribose-1-phosphate (MTR-1-P) into methylthioribulose-1-phosphate (MTRu-1-P). The chain is Methylthioribose-1-phosphate isomerase from Pseudomonas syringae pv. syringae (strain B728a).